We begin with the raw amino-acid sequence, 244 residues long: Small ribosomal subunit protein uS2 (244 aa).

It belongs to the universal ribosomal protein uS2 family.

This Psychromonas ingrahamii (strain DSM 17664 / CCUG 51855 / 37) protein is Small ribosomal subunit protein uS2.